A 451-amino-acid polypeptide reads, in one-letter code: Glyceraldehyde-3-phosphate dehydrogenase B, chloroplastic (451 aa).

The transit peptide at 1-83 directs the protein to the chloroplast; the sequence is MASHAALAPS…AAPVRGETVA (83 aa). Residues 94–95, D118, and R163 contribute to the NADP(+) site; that span reads RI. D-glyceraldehyde 3-phosphate-binding positions include 237-239, T268, R283, 296-297, and R319; these read SCT and TG. Residue C238 is the Nucleophile of the active site. N402 contributes to the NADP(+) binding site.

This sequence belongs to the glyceraldehyde-3-phosphate dehydrogenase family. In terms of assembly, tetramer of either four A chains (GAPDH 2) or two A and two B chains (GAPDH 1).

Its subcellular location is the plastid. The protein localises to the chloroplast. The catalysed reaction is D-glyceraldehyde 3-phosphate + phosphate + NADP(+) = (2R)-3-phospho-glyceroyl phosphate + NADPH + H(+). It functions in the pathway carbohydrate biosynthesis; Calvin cycle. In Spinacia oleracea (Spinach), this protein is Glyceraldehyde-3-phosphate dehydrogenase B, chloroplastic (GAPB).